We begin with the raw amino-acid sequence, 113 residues long: Endoribonuclease SymE (113 aa).

The region spanning 29 to 74 (SRYPDYSRIPAITLKGQWLEAAGFATGTAVDVKVMEGCIVLTAQPP) is the SpoVT-AbrB domain.

Belongs to the SymE family.

It localises to the cytoplasm. In terms of biological role, involved in the degradation and recycling of damaged RNA. It is itself a target for degradation by the ATP-dependent protease Lon. The sequence is that of Endoribonuclease SymE from Escherichia coli (strain K12 / MC4100 / BW2952).